A 467-amino-acid chain; its full sequence is Sodium-dependent phosphate transport protein 1 (467 aa).

Residues asparagine 41, asparagine 49, and asparagine 58 are each glycosylated (N-linked (GlcNAc...) asparagine). 10 helical membrane passes run 81–101, 119–139, 178–198, 200–220, 257–277, 301–321, 339–359, 365–385, 401–421, and 433–453; these read GIIL…VGYF, SVLS…VVVC, FLLG…SLGW, MVFY…FVLF, AILK…FFWS, GFLS…AGQL, LFTA…PYLS, IVIF…GVFI, CSTL…GLIL, and FILM…VATA.

It belongs to the major facilitator superfamily. Sodium/anion cotransporter family. In terms of assembly, interacts with PDZK1. Expressed in kidney cortex, liver and brain but not in other tissues.

It is found in the apical cell membrane. The enzyme catalyses 3 Na(+)(out) + phosphate(out) = 3 Na(+)(in) + phosphate(in). It catalyses the reaction urate(out) = urate(in). Important for the resorption of phosphate by the kidney. May be involved in actively transporting phosphate into cells via Na(+) cotransport in the renal brush border membrane. Plays a role in urate transport in the kidney. The chain is Sodium-dependent phosphate transport protein 1 (SLC17A1) from Homo sapiens (Human).